Reading from the N-terminus, the 348-residue chain is Zinc finger and SCAN domain-containing protein 16 (348 aa).

Residues 41–123 form the SCAN box domain; it reads RQHFRKLCYQ…TVLEDLEREL (83 aa). Disordered stretches follow at residues 160–184 and 205–226; these read PKKT…TKNE and RLNK…EGRS. Residues 163–184 show a composition bias toward basic and acidic residues; sequence TQLEQEAGKPQRNGDKTRTKNE. C2H2-type zinc fingers lie at residues 236-258, 264-286, 292-314, and 320-342; these read YKCD…RRTH, YKCD…HRVH, YKCK…QRIH, and YECD…QRIH.

The protein belongs to the krueppel C2H2-type zinc-finger protein family.

It is found in the nucleus. In terms of biological role, may be involved in transcriptional regulation. The chain is Zinc finger and SCAN domain-containing protein 16 (ZSCAN16) from Homo sapiens (Human).